Here is a 147-residue protein sequence, read N- to C-terminus: UPF0306 protein YPTB0506 (147 aa).

The protein belongs to the UPF0306 family.

The protein is UPF0306 protein YPTB0506 of Yersinia pseudotuberculosis serotype I (strain IP32953).